Reading from the N-terminus, the 444-residue chain is Orexin receptor type 2 (444 aa).

Over residues 1-10 (MSGTKLEDSP) the composition is skewed to basic and acidic residues. The disordered stretch occupies residues 1-30 (MSGTKLEDSPPCRNWSSAPELNETQEPFLN). Over 1–54 (MSGTKLEDSPPCRNWSSAPELNETQEPFLNPTDYDDEEFLRYLWREYLHPKEYE) the chain is Extracellular. N-linked (GlcNAc...) asparagine glycosylation is found at Asn-14 and Asn-22. Polar residues predominate over residues 14–27 (NWSSAPELNETQEP). A required for response to orexin-A region spans residues 33-49 (DYDDEEFLRYLWREYLH). The helical transmembrane segment at 55–75 (WVLIAGYIIVFVVALIGNVLV) threads the bilayer. Residues 76-88 (CVAVWKNHHMRTV) lie on the Cytoplasmic side of the membrane. A helical transmembrane segment spans residues 89–110 (TNYFIVNLSLADVLVTITCLPA). The Extracellular segment spans residues 111-127 (TLVVDITETWFFGQSLC). Cys-127 and Cys-210 form a disulfide bridge. The chain crosses the membrane as a helical span at residues 128–150 (KVIPYLQTVSVSVSVLTLSCIAL). Residues 151–170 (DRWYAICHPLMFKSTAKRAR) are Cytoplasmic-facing. Residues 171–191 (NSIVIIWIVSCIIMIPQAIVM) traverse the membrane as a helical segment. Topologically, residues 192–222 (ECSTMLPGLANKTTLFTVCDERWGGEIYPKM) are extracellular. The N-linked (GlcNAc...) asparagine glycan is linked to Asn-202. A helical membrane pass occupies residues 223 to 243 (YHICFFLVTYMAPLCLMVLAY). The Cytoplasmic portion of the chain corresponds to 244–304 (LQIFRKLWCR…QIRARRKTAR (61 aa)). The helical transmembrane segment at 305–326 (MLMVVLLVFAICYLPISILNVL) threads the bilayer. Topologically, residues 327–342 (KRVFGMFTHTEDRETV) are extracellular. The helical transmembrane segment at 343 to 366 (YAWFTFSHWLVYANSAANPIIYNF) threads the bilayer. Topologically, residues 367-444 (LSGKFREEFK…ANGAGQLQNW (78 aa)) are cytoplasmic.

It belongs to the G-protein coupled receptor 1 family.

It is found in the cell membrane. In terms of biological role, nonselective, high-affinity receptor for both orexin-A and orexin-B neuropeptides. Triggers an increase in cytoplasmic Ca(2+) levels in response to orexin-A binding. The polypeptide is Orexin receptor type 2 (HCRTR2) (Sus scrofa (Pig)).